Reading from the N-terminus, the 266-residue chain is Luciferase (266 aa).

Residues 22-41 traverse the membrane as a helical segment; it reads GLAAACCALAVASTIAFPYI.

This sequence belongs to the fungal luciferase family.

The protein resides in the membrane. It catalyses the reaction 3-hydroxyhispidin + O2 = (E)-caffeoylpyruvate + hnu + CO2. It carries out the reaction 3-hydroxyhispidin + O2 = 4-[(E)-2-(3,4-dihydroxyphenyl)ethenyl]-1,7-dihydroxy-2,3,5-trioxabicyclo[2.2.2]oct-7-en-6-one. In terms of biological role, luciferase; part of the gene cluster that mediates the fungal bioluminescence cycle. Uses the fungal luciferin 3-hydroxyhispidin as a substrate to produce an endoperoxide as a high-energy intermediate with decomposition that yields oxyluciferin (also known as caffeoylpyruvate) and light emission. The fungal bioluminescence cycle begins with the hispidin synthetase that catalyzes the formation of hispidin which is further hydroxylated by the hispidin-3-hydroxylase, yielding the fungal luciferin 3-hydroxyhispidin. The luciferase then produces an endoperoxide as a high-energy intermediate with decomposition that yields oxyluciferin and light emission. Oxyluciferin can be recycled to caffeic acid by caffeoylpyruvate hydrolase. This chain is Luciferase, found in Armillaria gallica (Bulbous honey fungus).